A 128-amino-acid chain; its full sequence is Early E3 14.5 kDa protein (128 aa).

It belongs to the adenoviridae E3_15 family.

In terms of biological role, protects virus-infected cells from TNF-induced cytolysis. The polypeptide is Early E3 14.5 kDa protein (Human adenovirus C serotype 5 (HAdV-5)).